We begin with the raw amino-acid sequence, 324 residues long: Mevalonate kinase (324 aa).

103-113 (PPRAGLGSSAA) provides a ligand contact to ATP. The active-site Proton acceptor is aspartate 154.

This sequence belongs to the GHMP kinase family. Mevalonate kinase subfamily. In terms of assembly, homodimer. Mg(2+) serves as cofactor.

The protein localises to the cytoplasm. It carries out the reaction (R)-mevalonate + ATP = (R)-5-phosphomevalonate + ADP + H(+). The protein operates within isoprenoid biosynthesis; isopentenyl diphosphate biosynthesis via mevalonate pathway; isopentenyl diphosphate from (R)-mevalonate: step 1/3. Functionally, catalyzes the phosphorylation of (R)-mevalonate (MVA) to (R)-mevalonate 5-phosphate (MVAP). Functions in the mevalonate (MVA) pathway leading to isopentenyl diphosphate (IPP), a key precursor for the biosynthesis of isoprenoid compounds such as archaeal membrane lipids. This chain is Mevalonate kinase, found in Aeropyrum pernix (strain ATCC 700893 / DSM 11879 / JCM 9820 / NBRC 100138 / K1).